The sequence spans 567 residues: D-lactate dehydrogenase [cytochrome], mitochondrial (567 aa).

A mitochondrion-targeting transit peptide spans 1–56 (MAFASKFARSKTILSFLRPCRQLHSTPKSTGDVTVLSPVKGRRRLPTCWSSSLFPL). The 178-residue stretch at 142 to 319 (AVNIPDVVVF…TEITLRLQKI (178 aa)) folds into the FAD-binding PCMH-type domain.

This sequence belongs to the FAD-binding oxidoreductase/transferase type 4 family. Homodimer. FAD serves as cofactor. Expressed in leaves, stems, flowers and roots.

The protein localises to the mitochondrion. The catalysed reaction is (R)-lactate + 2 Fe(III)-[cytochrome c] = 2 Fe(II)-[cytochrome c] + pyruvate + 2 H(+). With respect to regulation, inhibited by cyanide ions. Functionally, catalyzes the stereospecific oxidation of D-lactate to pyruvate. Involved in the detoxification of methylglyoxal and D-lactate, but probably not involved in the metabolization of glycolate. The polypeptide is D-lactate dehydrogenase [cytochrome], mitochondrial (Arabidopsis thaliana (Mouse-ear cress)).